A 158-amino-acid chain; its full sequence is Lipoprotein signal peptidase (158 aa).

The next 4 helical transmembrane spans lie at 7–27, 38–58, 67–87, and 95–115; these read LFWI…YWVV, ILPG…FSLF, WLSL…PVLE, and GLIL…GYVV. Active-site residues include Asp116 and Asp132. The chain crosses the membrane as a helical span at residues 125–145; it reads FAVFNMADSFISIGIVCLLLA.

The protein belongs to the peptidase A8 family.

The protein localises to the cell inner membrane. The catalysed reaction is Release of signal peptides from bacterial membrane prolipoproteins. Hydrolyzes -Xaa-Yaa-Zaa-|-(S,diacylglyceryl)Cys-, in which Xaa is hydrophobic (preferably Leu), and Yaa (Ala or Ser) and Zaa (Gly or Ala) have small, neutral side chains.. The protein operates within protein modification; lipoprotein biosynthesis (signal peptide cleavage). Functionally, this protein specifically catalyzes the removal of signal peptides from prolipoproteins. The sequence is that of Lipoprotein signal peptidase from Trichormus variabilis (strain ATCC 29413 / PCC 7937) (Anabaena variabilis).